The following is a 247-amino-acid chain: 7-cyano-7-deazaguanine synthase (247 aa).

21 to 31 (FSGGQDSTACL) provides a ligand contact to ATP. Residues cysteine 209, cysteine 224, cysteine 227, and cysteine 230 each contribute to the Zn(2+) site.

It belongs to the QueC family. Requires Zn(2+) as cofactor.

It carries out the reaction 7-carboxy-7-deazaguanine + NH4(+) + ATP = 7-cyano-7-deazaguanine + ADP + phosphate + H2O + H(+). Its pathway is purine metabolism; 7-cyano-7-deazaguanine biosynthesis. Catalyzes the ATP-dependent conversion of 7-carboxy-7-deazaguanine (CDG) to 7-cyano-7-deazaguanine (preQ(0)). The polypeptide is 7-cyano-7-deazaguanine synthase (Halorhodospira halophila (strain DSM 244 / SL1) (Ectothiorhodospira halophila (strain DSM 244 / SL1))).